A 277-amino-acid polypeptide reads, in one-letter code: Undecaprenyl-diphosphatase 1 (277 aa).

Helical transmembrane passes span 1 to 21 (MSLL…FLPI), 39 to 58 (AGFS…VILY), 85 to 105 (FWFA…GILF), 113 to 133 (FKAP…LIII), 147 to 167 (MTIW…IPGL), 191 to 211 (SFLL…DDLI), 226 to 246 (ASFV…LNLV), and 251 to 271 (LVYF…FQDA).

It belongs to the UppP family.

It is found in the cell membrane. It catalyses the reaction di-trans,octa-cis-undecaprenyl diphosphate + H2O = di-trans,octa-cis-undecaprenyl phosphate + phosphate + H(+). Catalyzes the dephosphorylation of undecaprenyl diphosphate (UPP). Confers resistance to bacitracin. The chain is Undecaprenyl-diphosphatase 1 from Shouchella clausii (strain KSM-K16) (Alkalihalobacillus clausii).